Reading from the N-terminus, the 288-residue chain is Allergen Asp f 7 homolog (288 aa).

The first 20 residues, 1-20, serve as a signal peptide directing secretion; it reads MAPQFLKALTVATALGATLA. 2 stretches are compositionally biased toward low complexity: residues 48 to 107 and 117 to 129; these read TVHG…SSSV and TTSTPAPEPTTST. The segment at 48-161 is disordered; the sequence is TVHGTPGPDY…PPVVSIPPIG (114 aa). Over residues 130–151 the composition is skewed to pro residues; that stretch reads TPPPPPPAMTTPPPPPPPPATK. The N-linked (GlcNAc...) asparagine glycan is linked to asparagine 268.

The protein localises to the secreted. The protein is Allergen Asp f 7 homolog of Arthroderma benhamiae (strain ATCC MYA-4681 / CBS 112371) (Trichophyton mentagrophytes).